The sequence spans 124 residues: MARLVGVDLPRDKRMEVALTYIYGIGRTRANEILEATGIERDLRTRDLTDDQLTHLRDYIEANLKVEGDLRREVQADIRRKMEIGCYQGLRHRRGLPVRGQRTKTNARTRKGPKRTIAGKKKAR.

The segment at 98-124 (VRGQRTKTNARTRKGPKRTIAGKKKAR) is disordered.

The protein belongs to the universal ribosomal protein uS13 family. Part of the 30S ribosomal subunit. Forms a loose heterodimer with protein S19. Forms two bridges to the 50S subunit in the 70S ribosome.

Functionally, located at the top of the head of the 30S subunit, it contacts several helices of the 16S rRNA. In the 70S ribosome it contacts the 23S rRNA (bridge B1a) and protein L5 of the 50S subunit (bridge B1b), connecting the 2 subunits; these bridges are implicated in subunit movement. Contacts the tRNAs in the A and P-sites. The protein is Small ribosomal subunit protein uS13 of Mycobacterium leprae (strain Br4923).